A 503-amino-acid chain; its full sequence is Maturase K (503 aa).

It belongs to the intron maturase 2 family. MatK subfamily.

The protein localises to the plastid. It is found in the chloroplast. In terms of biological role, usually encoded in the trnK tRNA gene intron. Probably assists in splicing its own and other chloroplast group II introns. The sequence is that of Maturase K from Rosa canina (Dog rose).